A 201-amino-acid chain; its full sequence is MSRYRGPRLKIIRRLRTLPGLTNKRPKSRNDPTNQSSSRKISQYRIRPEEKQKLRFHYGLTERQLLKYVRIAGRAKGSTGQILLQLLEMRLDNIIFRLGMALTIPGARQLVNHRHILVNDRVVDIPSYRCKPRDVITIIDQRRSRAMIGKNLDLSQKDQMPNHLTLHSSQYKGLVNQIIDSKWISLKINELLVVEYYSRQA.

Residues Gly20–Gln43 are disordered. Polar residues predominate over residues Asp31 to Ile41. In terms of domain architecture, S4 RNA-binding spans Met89–Lys157.

It belongs to the universal ribosomal protein uS4 family. Part of the 30S ribosomal subunit. Contacts protein S5. The interaction surface between S4 and S5 is involved in control of translational fidelity.

Its subcellular location is the plastid. It localises to the chloroplast. Functionally, one of the primary rRNA binding proteins, it binds directly to 16S rRNA where it nucleates assembly of the body of the 30S subunit. With S5 and S12 plays an important role in translational accuracy. The chain is Small ribosomal subunit protein uS4c (rps4) from Cycas taitungensis (Prince sago).